The following is a 42-amino-acid chain: Photosystem I reaction center subunit IX (42 aa).

Residues 7-27 traverse the membrane as a helical segment; it reads YLSTAPVLAAIWFGILAGLLI.

It belongs to the PsaJ family.

The protein resides in the plastid. It localises to the chloroplast thylakoid membrane. In terms of biological role, may help in the organization of the PsaE and PsaF subunits. In Staurastrum punctulatum (Green alga), this protein is Photosystem I reaction center subunit IX.